Here is a 71-residue protein sequence, read N- to C-terminus: uncharacterized protein (71 aa).

This is an uncharacterized protein from Escherichia coli (strain K12).